A 159-amino-acid chain; its full sequence is Heterocyst differentiation protein HetP (159 aa).

A required to complement a hetP deletion region spans residues 1 to 50 (MNQNTTGITNYNKAINPQQFDKVVEAILAGKYSWACVLMLRFAGYNPMHY).

It belongs to the HetP family. In bacterial two-hybrid assays interacts weakly with Asl1930, Alr2902 and Alr3234.

In terms of biological role, promotes heterocyst differentiation and commitment when nitrogen is limiting. Interplay between the 4 HetP paralogs controls the timing of commitment to heterocyst formation and its duration. Epistatic analysis show that the 3 paralogs act upstream of hetP to delay commitment (asl1930, alr3234) or inhibit development (alr2902). Asl1930 and Alr3234 must also attenuate the activity of Alr2902. Required for heterocyst formation. Functions directly downstream of master regulator HetR to promote heterocyst differentiation, functioning downstream of patterning (cell choice). Partially functionally redundant with homologs alr2902 and asl1930 but not alr3234. Overexpression leads to more than wild-type levels of heterocysts. Overexpression in the absence of hetR partially bypasses hetR deletion, allowing differentiation of heterocysts, although they only fix nitrogen in the absence of oxygen (a Fox- Fix+ phenotype), suggesting they are not fully. This Nostoc sp. (strain PCC 7120 / SAG 25.82 / UTEX 2576) protein is Heterocyst differentiation protein HetP.